A 260-amino-acid chain; its full sequence is Ribonuclease HII (260 aa).

The region spanning 73 to 260 (LHIAGIDEAG…APVQQQLDIV (188 aa)) is the RNase H type-2 domain. A divalent metal cation contacts are provided by Asp-79, Glu-80, and Asp-171.

Belongs to the RNase HII family. Requires Mn(2+) as cofactor. The cofactor is Mg(2+).

It is found in the cytoplasm. The catalysed reaction is Endonucleolytic cleavage to 5'-phosphomonoester.. Endonuclease that specifically degrades the RNA of RNA-DNA hybrids. The chain is Ribonuclease HII from Desulfitobacterium hafniense (strain Y51).